We begin with the raw amino-acid sequence, 167 residues long: Small ribosomal subunit protein uS5 (167 aa).

In terms of domain architecture, S5 DRBM spans 12–75 (LQEKLIAVNR…EKARRNMVTV (64 aa)).

The protein belongs to the universal ribosomal protein uS5 family. In terms of assembly, part of the 30S ribosomal subunit. Contacts proteins S4 and S8.

Functionally, with S4 and S12 plays an important role in translational accuracy. Its function is as follows. Located at the back of the 30S subunit body where it stabilizes the conformation of the head with respect to the body. This is Small ribosomal subunit protein uS5 from Shewanella oneidensis (strain ATCC 700550 / JCM 31522 / CIP 106686 / LMG 19005 / NCIMB 14063 / MR-1).